The primary structure comprises 159 residues: MNNSSLENSASLKVILKQRKKKRLLIILLCCLVMAIAASLVVYAMRHAVSFFRMPSEITREDILTGRPLRLGGFVEKGTVRYVGESGVIFFVTDNKKHEKVVFNGALPDLFREGQGVIVEGHFDKQGFFIGTRILAKHDATYMPKETVDRLKKHYSVEK.

Over 1-23 (MNNSSLENSASLKVILKQRKKKR) the chain is Cytoplasmic. The helical; Signal-anchor for type II membrane protein transmembrane segment at 24-44 (LLIILLCCLVMAIAASLVVYA) threads the bilayer. Residues 45–159 (MRHAVSFFRM…RLKKHYSVEK (115 aa)) lie on the Periplasmic side of the membrane. Positions 138 and 142 each coordinate heme.

The protein belongs to the CcmE/CycJ family.

It is found in the cell inner membrane. Functionally, heme chaperone required for the biogenesis of c-type cytochromes. Transiently binds heme delivered by CcmC and transfers the heme to apo-cytochromes in a process facilitated by CcmF and CcmH. This chain is Cytochrome c-type biogenesis protein CcmE, found in Bartonella tribocorum (strain CIP 105476 / IBS 506).